The sequence spans 144 residues: Transmembrane protein 170A (144 aa).

Residues 1–50 (MEREGSGGSGGSAGLLQQILSLKVVPRVGNGTLCPNSTSLCSFPEMWYGV) lie on the Lumenal side of the membrane. 2 N-linked (GlcNAc...) asparagine glycosylation sites follow: Asn-30 and Asn-36. Residues 51 to 71 (FLWALVSSLFFHVPAGLLALF) form a helical membrane-spanning segment. Residues 72-85 (TLRHHKYGRFMSVS) lie on the Cytoplasmic side of the membrane. Residues 86-106 (ILLMGIVGPITAGILTSAAIA) form a helical membrane-spanning segment. Residues 107–116 (GVYRAAGKEM) are Lumenal-facing. Residues 117–137 (IPFEALTLGTGQTFCVLVVSF) form a helical membrane-spanning segment. Over 138-144 (LRILATL) the chain is Cytoplasmic.

The protein belongs to the TMEM170 family. Interacts with RTN4.

The protein localises to the endoplasmic reticulum membrane. The protein resides in the nucleus envelope. Acts as a regulator of endoplasmic reticulum (ER) and nuclear envelope (NE) morphogenesis. Affects the ratio between tubular ER and ER sheets by promoting sheet formation at the expense of tubules. Influences NE expansion, nuclear pore complex formation and proper localization of inner nuclear membrane proteins. The polypeptide is Transmembrane protein 170A (TMEM170A) (Homo sapiens (Human)).